Reading from the N-terminus, the 199-residue chain is Recombination protein RecR (199 aa).

The segment at 58-73 adopts a C4-type zinc-finger fold; that stretch reads CSACGNVDTQDPCAIC. The Toprim domain occupies 81–176; that stretch reads HILCIVEEVG…SVSRLAHGVP (96 aa).

Belongs to the RecR family.

In terms of biological role, may play a role in DNA repair. It seems to be involved in an RecBC-independent recombinational process of DNA repair. It may act with RecF and RecO. The chain is Recombination protein RecR from Parvibaculum lavamentivorans (strain DS-1 / DSM 13023 / NCIMB 13966).